The following is a 229-amino-acid chain: Zinc finger matrin-type protein 4 (229 aa).

Matrin-type zinc fingers lie at residues 14–44 (SYCK…KVRL), 72–106 (DKNK…LKLL), 145–175 (RYCG…NAAR), and 198–228 (YRCT…NLKN).

It localises to the nucleus. In Mus musculus (Mouse), this protein is Zinc finger matrin-type protein 4 (Zmat4).